The following is a 180-amino-acid chain: Der GTPase-activating protein YihI (180 aa).

2 disordered regions span residues 1–87 (MSRK…MTKQ) and 142–180 (GLLE…DYKG). Over residues 23–32 (NRTESDVEGR) the composition is skewed to basic and acidic residues. The span at 33 to 43 (LRKRAKKRKGL) shows a compositional bias: basic residues. The span at 51 to 68 (EVNEQKKQSSEQNRDPRL) shows a compositional bias: basic and acidic residues. Over residues 165-180 (DLLADFDDINFDDYKG) the composition is skewed to acidic residues.

It belongs to the YihI family. Interacts with Der.

In terms of biological role, a GTPase-activating protein (GAP) that modifies Der/EngA GTPase function. May play a role in ribosome biogenesis. The chain is Der GTPase-activating protein YihI from Vibrio parahaemolyticus serotype O3:K6 (strain RIMD 2210633).